We begin with the raw amino-acid sequence, 449 residues long: Glucose-6-phosphate isomerase (449 aa).

Glu290 acts as the Proton donor in catalysis. Active-site residues include His311 and Lys425.

Belongs to the GPI family.

Its subcellular location is the cytoplasm. It catalyses the reaction alpha-D-glucose 6-phosphate = beta-D-fructose 6-phosphate. The protein operates within carbohydrate biosynthesis; gluconeogenesis. It participates in carbohydrate degradation; glycolysis; D-glyceraldehyde 3-phosphate and glycerone phosphate from D-glucose: step 2/4. Catalyzes the reversible isomerization of glucose-6-phosphate to fructose-6-phosphate. The polypeptide is Glucose-6-phosphate isomerase (Exiguobacterium sibiricum (strain DSM 17290 / CCUG 55495 / CIP 109462 / JCM 13490 / 255-15)).